A 946-amino-acid chain; its full sequence is Bifunctional glutamine synthetase adenylyltransferase/adenylyl-removing enzyme (946 aa).

An adenylyl removase region spans residues 1–440 (MKPLSSPLQQ…VFNELIGDDE (440 aa)). Residues 449-946 (SEHWRELWQD…ASWQKWLVAG (498 aa)) form an adenylyl transferase region.

The protein belongs to the GlnE family. The cofactor is Mg(2+).

It catalyses the reaction [glutamine synthetase]-O(4)-(5'-adenylyl)-L-tyrosine + phosphate = [glutamine synthetase]-L-tyrosine + ADP. The enzyme catalyses [glutamine synthetase]-L-tyrosine + ATP = [glutamine synthetase]-O(4)-(5'-adenylyl)-L-tyrosine + diphosphate. In terms of biological role, involved in the regulation of glutamine synthetase GlnA, a key enzyme in the process to assimilate ammonia. When cellular nitrogen levels are high, the C-terminal adenylyl transferase (AT) inactivates GlnA by covalent transfer of an adenylyl group from ATP to specific tyrosine residue of GlnA, thus reducing its activity. Conversely, when nitrogen levels are low, the N-terminal adenylyl removase (AR) activates GlnA by removing the adenylyl group by phosphorolysis, increasing its activity. The regulatory region of GlnE binds the signal transduction protein PII (GlnB) which indicates the nitrogen status of the cell. This is Bifunctional glutamine synthetase adenylyltransferase/adenylyl-removing enzyme from Citrobacter koseri (strain ATCC BAA-895 / CDC 4225-83 / SGSC4696).